The sequence spans 132 residues: Small ribosomal subunit protein uS8 (132 aa).

This sequence belongs to the universal ribosomal protein uS8 family. As to quaternary structure, part of the 30S ribosomal subunit. Contacts proteins S5 and S12.

Its function is as follows. One of the primary rRNA binding proteins, it binds directly to 16S rRNA central domain where it helps coordinate assembly of the platform of the 30S subunit. This chain is Small ribosomal subunit protein uS8, found in Alkaliphilus metalliredigens (strain QYMF).